A 630-amino-acid polypeptide reads, in one-letter code: Elongation factor 4 (630 aa).

The tract at residues 1–22 (MTVARNRAGAGPGKGSPISSFA) is disordered. The tr-type G domain occupies 30–211 (ARIRNFCIIA…EVVRQVPAPV (182 aa)). Residues 42–47 (DHGKST) and 158–161 (NKID) each bind GTP.

It belongs to the TRAFAC class translation factor GTPase superfamily. Classic translation factor GTPase family. LepA subfamily.

It is found in the cell membrane. The catalysed reaction is GTP + H2O = GDP + phosphate + H(+). Its function is as follows. Required for accurate and efficient protein synthesis under certain stress conditions. May act as a fidelity factor of the translation reaction, by catalyzing a one-codon backward translocation of tRNAs on improperly translocated ribosomes. Back-translocation proceeds from a post-translocation (POST) complex to a pre-translocation (PRE) complex, thus giving elongation factor G a second chance to translocate the tRNAs correctly. Binds to ribosomes in a GTP-dependent manner. The chain is Elongation factor 4 from Rhodococcus jostii (strain RHA1).